The sequence spans 353 residues: Paraneoplastic antigen Ma1 (353 aa).

The protein belongs to the PNMA family. As to expression, testis- and brain-specific. In some cancer patients, specifically expressed by paraneoplastic tumor cells.

The protein localises to the nucleus. It localises to the nucleolus. The protein is Paraneoplastic antigen Ma1 (PNMA1) of Homo sapiens (Human).